Reading from the N-terminus, the 409-residue chain is MMPQSGVAQPPMAPMSMDQHQYQQQAPPPTQQQQWMMPPQQPQQPQFQPQSQPAWAQQPSQQQYGAMATTNPNPSPTGNPNEVRSLWIGDLQYWMDENYLSTCFYHTGELVSAKVIRNKQTGQSEGYGFLEFRSHAAAETILQTYNGTLMPNVEQNFRMNWASLGAGERRDDSAEHTIFVGDLAADVTDYILQETFKSVYSSVRGAKVVTDRITGRSKGYGFVKFADESEQLRAMTEMNGVLCSTRPMRIGPAANKKPVGTPQKATYQNPQATQGESDPNNTTIFVGGLDPTVAEEHLRQVFSPYGELVHVKIVAGKRCGFVQFGTRASAEQALSSLNGTQLGGQSIRLSWGRSPSSKQTDQTQWGGSGGAYYGYGQGYEAYGYAPPAQDPNMYYGNYPGYANYQQPQQ.

Residues Met1–Val83 are disordered. The segment covering Gln19 to Asn81 has biased composition (low complexity). RRM domains lie at Arg84–Leu164 and His176–Asn255. A disordered region spans residues Gly251–Asn280. Polar residues predominate over residues Gln263 to Asn280. Positions Thr282–Ser354 constitute an RRM 3 domain.

It belongs to the polyadenylate-binding RBP45 family. As to quaternary structure, interacts with the poly(A) tail of mRNA in nucleus. As to expression, constitutively expressed in leaves, roots, and stems.

The protein localises to the nucleus. In terms of biological role, heterogeneous nuclear ribonucleoprotein (hnRNP)-protein binding the poly(A) tail of mRNA and probably involved in some steps of pre-mRNA maturation. The polypeptide is Polyadenylate-binding protein RBP45 (RBP45) (Nicotiana plumbaginifolia (Leadwort-leaved tobacco)).